The chain runs to 197 residues: Small ribosomal subunit protein uS4B (197 aa).

An S4 RNA-binding domain is found at 88–150 (SRLDNMVYRM…SRKTEMFVNN (63 aa)).

It belongs to the universal ribosomal protein uS4 family. Part of the 30S ribosomal subunit. Contacts protein S5. The interaction surface between S4 and S5 is involved in control of translational fidelity.

In terms of biological role, one of the primary rRNA binding proteins, it binds directly to 16S rRNA where it nucleates assembly of the body of the 30S subunit. With S5 and S12 plays an important role in translational accuracy. This is Small ribosomal subunit protein uS4B from Clostridium perfringens (strain SM101 / Type A).